The sequence spans 160 residues: Transcription elongation factor GreA (160 aa).

Residues 53 to 73 (AREEQGMVEARIRDIEGRLQN) adopt a coiled-coil conformation.

The protein belongs to the GreA/GreB family.

In terms of biological role, necessary for efficient RNA polymerase transcription elongation past template-encoded arresting sites. The arresting sites in DNA have the property of trapping a certain fraction of elongating RNA polymerases that pass through, resulting in locked ternary complexes. Cleavage of the nascent transcript by cleavage factors such as GreA or GreB allows the resumption of elongation from the new 3'terminus. GreA releases sequences of 2 to 3 nucleotides. The polypeptide is Transcription elongation factor GreA (Pseudomonas putida (strain ATCC 47054 / DSM 6125 / CFBP 8728 / NCIMB 11950 / KT2440)).